The primary structure comprises 347 residues: Protein RecA (347 aa).

Position 64–71 (64–71 (GPESSGKT)) interacts with ATP.

The protein belongs to the RecA family.

Its subcellular location is the cytoplasm. Can catalyze the hydrolysis of ATP in the presence of single-stranded DNA, the ATP-dependent uptake of single-stranded DNA by duplex DNA, and the ATP-dependent hybridization of homologous single-stranded DNAs. It interacts with LexA causing its activation and leading to its autocatalytic cleavage. The polypeptide is Protein RecA (Bartonella quintana (strain Toulouse) (Rochalimaea quintana)).